Here is a 302-residue protein sequence, read N- to C-terminus: uncharacterized protein (302 aa).

N-linked (GlcNAc...) asparagine glycosylation is found at asparagine 32, asparagine 39, and asparagine 94. One can recognise a ShKT domain in the interval 80-115; sequence CRDTDMNCAVWVATNTSDCENVELVNSHCPRTCQTC. Intrachain disulfides connect cysteine 80/cysteine 115, cysteine 87/cysteine 108, and cysteine 98/cysteine 112. The N-linked (GlcNAc...) asparagine glycan is linked to asparagine 181.

This is an uncharacterized protein from Caenorhabditis elegans.